The chain runs to 335 residues: Nucleoid-associated protein YejK (335 aa).

The protein belongs to the YejK family.

The protein localises to the cytoplasm. The protein resides in the nucleoid. This chain is Nucleoid-associated protein YejK, found in Shigella boydii serotype 18 (strain CDC 3083-94 / BS512).